A 104-amino-acid polypeptide reads, in one-letter code: Large ribosomal subunit protein bL21 (104 aa).

It belongs to the bacterial ribosomal protein bL21 family. As to quaternary structure, part of the 50S ribosomal subunit. Contacts protein L20.

This protein binds to 23S rRNA in the presence of protein L20. The sequence is that of Large ribosomal subunit protein bL21 from Streptococcus sanguinis (strain SK36).